The primary structure comprises 361 residues: Phosphate acyltransferase (361 aa).

It belongs to the PlsX family. As to quaternary structure, homodimer. Probably interacts with PlsY.

It is found in the cytoplasm. It catalyses the reaction a fatty acyl-[ACP] + phosphate = an acyl phosphate + holo-[ACP]. It participates in lipid metabolism; phospholipid metabolism. Catalyzes the reversible formation of acyl-phosphate (acyl-PO(4)) from acyl-[acyl-carrier-protein] (acyl-ACP). This enzyme utilizes acyl-ACP as fatty acyl donor, but not acyl-CoA. In Anaeromyxobacter dehalogenans (strain 2CP-C), this protein is Phosphate acyltransferase.